Reading from the N-terminus, the 263-residue chain is 4-hydroxy-tetrahydrodipicolinate reductase (263 aa).

Residues 8–13 (GACGKM), Asp34, 97–99 (GTT), and 123–126 (APNF) contribute to the NAD(+) site. His153 functions as the Proton donor/acceptor in the catalytic mechanism. A (S)-2,3,4,5-tetrahydrodipicolinate-binding site is contributed by His154. Lys157 serves as the catalytic Proton donor. Residue 163 to 164 (GT) coordinates (S)-2,3,4,5-tetrahydrodipicolinate.

This sequence belongs to the DapB family.

The protein resides in the cytoplasm. It catalyses the reaction (S)-2,3,4,5-tetrahydrodipicolinate + NAD(+) + H2O = (2S,4S)-4-hydroxy-2,3,4,5-tetrahydrodipicolinate + NADH + H(+). The enzyme catalyses (S)-2,3,4,5-tetrahydrodipicolinate + NADP(+) + H2O = (2S,4S)-4-hydroxy-2,3,4,5-tetrahydrodipicolinate + NADPH + H(+). The protein operates within amino-acid biosynthesis; L-lysine biosynthesis via DAP pathway; (S)-tetrahydrodipicolinate from L-aspartate: step 4/4. Functionally, catalyzes the conversion of 4-hydroxy-tetrahydrodipicolinate (HTPA) to tetrahydrodipicolinate. This chain is 4-hydroxy-tetrahydrodipicolinate reductase, found in Carboxydothermus hydrogenoformans (strain ATCC BAA-161 / DSM 6008 / Z-2901).